Here is a 483-residue protein sequence, read N- to C-terminus: Alpha-tubulin N-acetyltransferase (483 aa).

The N-acetyltransferase domain maps to Met1–Phe186. Acetyl-CoA contacts are provided by residues Phe120–Arg133 and Ser156–Lys165. 3 disordered regions span residues Thr204–Thr231, Glu330–Ser395, and Ser437–His472. Residues Tyr347–Gln369 show a composition bias toward basic and acidic residues. Over residues Ser370–Val383 the composition is skewed to low complexity.

The protein belongs to the acetyltransferase ATAT1 family.

The enzyme catalyses L-lysyl-[alpha-tubulin] + acetyl-CoA = N(6)-acetyl-L-lysyl-[alpha-tubulin] + CoA + H(+). Specifically acetylates 'Lys-40' in alpha-tubulin on the lumenal side of microtubules. Promotes microtubule destabilization and accelerates microtubule dynamics; this activity may be independent of acetylation activity. Acetylates alpha-tubulin with a slow enzymatic rate, due to a catalytic site that is not optimized for acetyl transfer. Enters the microtubule through each end and diffuses quickly throughout the lumen of microtubules. Acetylates only long/old microtubules because of its slow acetylation rate since it does not have time to act on dynamically unstable microtubules before the enzyme is released. In Anopheles gambiae (African malaria mosquito), this protein is Alpha-tubulin N-acetyltransferase.